The sequence spans 515 residues: Putative ribose/galactose/methyl galactoside import ATP-binding protein (515 aa).

ABC transporter domains are found at residues 26-262 (LEVA…VGRE) and 272-511 (VALG…KIMD). 58 to 65 (GENGAGKS) is a binding site for ATP.

This sequence belongs to the ABC transporter superfamily. Carbohydrate importer 2 (CUT2) (TC 3.A.1.2) family.

It is found in the cell inner membrane. It catalyses the reaction D-ribose(out) + ATP + H2O = D-ribose(in) + ADP + phosphate + H(+). It carries out the reaction D-galactose(out) + ATP + H2O = D-galactose(in) + ADP + phosphate + H(+). Part of an ABC transporter complex involved in carbohydrate import. Could be involved in ribose, galactose and/or methyl galactoside import. Responsible for energy coupling to the transport system. The sequence is that of Putative ribose/galactose/methyl galactoside import ATP-binding protein from Hahella chejuensis (strain KCTC 2396).